Reading from the N-terminus, the 201-residue chain is Small ribosomal subunit protein uS4 (201 aa).

A disordered region spans residues 28–47; sequence KKNYPPGQHGNSRKRKTSEY. One can recognise an S4 RNA-binding domain in the interval 92–155; it reads GRLDNIVFRL…KSLEVIANSL (64 aa).

This sequence belongs to the universal ribosomal protein uS4 family. In terms of assembly, part of the 30S ribosomal subunit. Contacts protein S5. The interaction surface between S4 and S5 is involved in control of translational fidelity.

One of the primary rRNA binding proteins, it binds directly to 16S rRNA where it nucleates assembly of the body of the 30S subunit. Its function is as follows. With S5 and S12 plays an important role in translational accuracy. The sequence is that of Small ribosomal subunit protein uS4 from Bacteroides fragilis (strain YCH46).